We begin with the raw amino-acid sequence, 116 residues long: MRYAFAAEATTCNAFWRNVDMTVTALYEVPLGVCTQDPDRWTTTPDDEAKTLCRACPRRWLCARDAVESAGAEGLWAGVVIPESGRARAFALGQLRSLAERNGYPVRDHRVSAQSA.

[4Fe-4S] cluster-binding residues include C12, C53, C56, and C62. A 4Fe-4S Wbl-type domain is found at 33-86; the sequence is VCTQDPDRWTTTPDDEAKTLCRACPRRWLCARDAVESAGAEGLWAGVVIPESGR.

This sequence belongs to the WhiB family. It depends on [4Fe-4S] cluster as a cofactor. Post-translationally, the Fe-S cluster can be nitrosylated by nitric oxide (NO). Upon Fe-S cluster removal intramolecular disulfide bonds are formed.

The protein localises to the cytoplasm. Functionally, acts as a transcriptional regulator. Probably redox-responsive. The apo- but not holo-form probably binds DNA. In Mycobacterium tuberculosis (strain CDC 1551 / Oshkosh), this protein is Probable transcriptional regulator WhiB6 (whiB6).